Here is a 556-residue protein sequence, read N- to C-terminus: Cholesterol oxidase (556 aa).

FAD contacts are provided by G18, E37, G88, A93, and V235. The Proton acceptor role is filled by H471. Residue G504 participates in FAD binding.

The protein belongs to the GMC oxidoreductase family. FAD serves as cofactor.

It catalyses the reaction cholesterol + O2 = cholest-5-en-3-one + H2O2. The catalysed reaction is cholest-5-en-3-one = cholest-4-en-3-one. It functions in the pathway steroid metabolism; cholesterol degradation. Its function is as follows. Bifunctional enzyme that catalyzes the oxidation and isomerization of cholesterol to cholestenone (cholest-4-en-3-one), an initial step in the cholesterol degradation process. The sequence is that of Cholesterol oxidase from Acinetobacter baumannii.